A 1657-amino-acid chain; its full sequence is Ras GTPase-activating-like protein IQGAP1 (1657 aa).

Serine 2 bears the N-acetylserine mark. Phosphoserine is present on serine 2. Residues leucine 44–leucine 159 form the Calponin-homology (CH) domain. Tyrosine 172 carries the phosphotyrosine modification. The residue at position 330 (serine 330) is a Phosphoserine. Positions glycine 679–asparagine 712 constitute a WW domain. IQ domains follow at residues asparagine 745–lysine 774, glutamine 775–serine 804, histidine 805–aspartate 834, and histidine 835–proline 864. The segment at glycine 956–glutamate 1274 is C1. The Ras-GAP domain maps to tyrosine 1020–alanine 1269. The tract at residues glutamine 1276 to lysine 1657 is C2. A disordered region spans residues threonine 1410–serine 1448. The span at glutamate 1417–serine 1448 shows a compositional bias: basic and acidic residues. A Phosphoserine; by PKC modification is found at serine 1441. Position 1443 is a phosphoserine; by PKC/PRKCE (serine 1443).

Interacts with CDC42; the interaction is demonstrated with IQGAP1 in GTP-bound and in nucleotide-free state. Interacts with RAC1. Does not interact with RHOA. Interacts with TSG101. Interacts with PAK6. Interacts with TMEM14B; this interaction increases IQGAP1 phosphorylation and induces its nuclear translocation. Interacts with SASH1. Interacts with PJVK. Interacts with SLC26A4; this interaction enhances the chloride-bicarbonate exchange activity of SLC26A4. Interacts with SVEP1. Interacts with ILK; the interaction is required for localization of IQGAP to the cell cortex. As to quaternary structure, (Microbial infection) Interacts with ebolavirus vp40. In terms of assembly, (Microbial infection) Interacts with human cytomegalovirus protein UL5. (Microbial infection) Interacts with C.jejuni invasion antigen D (CiaD). In terms of processing, phosphorylation of Ser-1443 by PKC/PRKCE prevents interaction between C1 and C2, allowing binding of nucleotide-free CDC42. Ser-1443 phosphorylation enhances the ability to promote neurite outgrowth. As to expression, expressed in the placenta, lung, and kidney. A lower level expression is seen in the heart, liver, skeletal muscle and pancreas.

It is found in the cell membrane. Its subcellular location is the nucleus. The protein localises to the cytoplasm. It localises to the cell cortex. The protein resides in the apical cell membrane. It is found in the basolateral cell membrane. Its function is as follows. Plays a crucial role in regulating the dynamics and assembly of the actin cytoskeleton. Recruited to the cell cortex by interaction with ILK which allows it to cooperate with its effector DIAPH1 to locally stabilize microtubules and allow stable insertion of caveolae into the plasma membrane. Binds to activated CDC42 but does not stimulate its GTPase activity. Associates with calmodulin. May promote neurite outgrowth. May play a possible role in cell cycle regulation by contributing to cell cycle progression after DNA replication arrest. This Homo sapiens (Human) protein is Ras GTPase-activating-like protein IQGAP1 (IQGAP1).